The sequence spans 548 residues: Folylpolyglutamate synthase (548 aa).

ATP is bound at residue 130–133 (GKGS). S157, E234, and H262 together coordinate Mg(2+). 2 residues coordinate ATP: R382 and D396.

It belongs to the folylpolyglutamate synthase family. It depends on a monovalent cation as a cofactor.

It localises to the mitochondrion inner membrane. The protein resides in the mitochondrion matrix. It is found in the cytoplasm. The catalysed reaction is (6S)-5,6,7,8-tetrahydrofolyl-(gamma-L-Glu)(n) + L-glutamate + ATP = (6S)-5,6,7,8-tetrahydrofolyl-(gamma-L-Glu)(n+1) + ADP + phosphate + H(+). It participates in cofactor biosynthesis; tetrahydrofolylpolyglutamate biosynthesis. Catalyzes conversion of folates to polyglutamate derivatives allowing concentration of folate compounds in the cell and the intracellular retention of these cofactors, which are important substrates for most of the folate-dependent enzymes that are involved in one-carbon transfer reactions involved in purine, pyrimidine and amino acid synthesis. Required for methionine synthesis and maintenance of intact mitochondrial DNA. Involved in telomere maintenance. The protein is Folylpolyglutamate synthase of Saccharomyces cerevisiae (strain FostersB) (Baker's yeast).